The following is a 1214-amino-acid chain: Ubiquitin carboxyl-terminal hydrolase 36 (1214 aa).

The segment at 124–169 (AVGSNGHDNNTVNGGTVNGNRKQTVDSGQSNQNSSANPNELPKPKR) is disordered. Low complexity predominate over residues 132–143 (NNTVNGGTVNGN). The segment covering 144–161 (RKQTVDSGQSNQNSSANP) has biased composition (polar residues). In terms of domain architecture, USP spans 192–502 (AGMLNVGNTC…NAYIMFYELD (311 aa)). C201 serves as the catalytic Nucleophile. H461 serves as the catalytic Proton acceptor. The segment covering 509-523 (SSTINNNSSSSSNNS) has biased composition (low complexity). The segment at 509–532 (SSTINNNSSSSSNNSVAPKLNGLR) is disordered. S553 and S555 each carry phosphoserine. 5 disordered regions span residues 631–819 (GEAA…KQKT), 836–964 (HRIA…ASKS), 977–1001 (QKLLNGSAKSAATTRPGNGYQSESV), 1048–1161 (HGDT…PNFQ), and 1176–1214 (KFQQQRALQRHLAAGGGFTRRQQQSTGQQQQQQQQQQQS). Positions 633-651 (AAPNANTNANANKSSCNNN) are enriched in low complexity. A compositionally biased stretch (acidic residues) spans 666 to 685 (SDEDEDEDDSDDDDDDDDDD). The residue at position 717 (T717) is a Phosphothreonine. A phosphoserine mark is found at S727 and S729. Low complexity-rich tracts occupy residues 735 to 751 (QQQQQQQQQLLQTPQQL) and 785 to 816 (KTNGSVSNTSNSSHSKAKSASNASSANVNSSK). Polar residues predominate over residues 856–868 (EQVQTEQGTKKLN). Low complexity predominate over residues 869-878 (SASSASASKS). At S891 the chain carries Phosphoserine. T894 carries the phosphothreonine modification. At S897 the chain carries Phosphoserine. Residues 915–942 (DDDDEEDEEEDDVEADADQEDDDDEVVV) show a composition bias toward acidic residues. The residue at position 951 (T951) is a Phosphothreonine. Polar residues predominate over residues 983–1001 (SAKSAATTRPGNGYQSESV). Residues 1058–1076 (NSSSNNSSNINSNSNSNSN) are compositionally biased toward low complexity. Residues 1089 to 1098 (EAREQRKRDA) are compositionally biased toward basic and acidic residues. Low complexity-rich tracts occupy residues 1178-1188 (QQQRALQRHLA) and 1197-1214 (QQQSTGQQQQQQQQQQQS).

It belongs to the peptidase C19 family. As to quaternary structure, interacts with atms/PAF1, but not with CycT.

The protein localises to the nucleus. It localises to the nucleolus. The catalysed reaction is Thiol-dependent hydrolysis of ester, thioester, amide, peptide and isopeptide bonds formed by the C-terminal Gly of ubiquitin (a 76-residue protein attached to proteins as an intracellular targeting signal).. Functionally, required for maintaining multiple types of adult stem cells, including male and female germline, epithelial follicle cell and intestinal stem cells. May function as a transcriptional repressor by continually deubiquiting histone H2B at the promoters of genes critical for cellular differentiation, thereby preventing histone H3 'Lys-4' trimethylation (H3K4). Controls selective autophagy activation by ubiquitinated proteins. The protein is Ubiquitin carboxyl-terminal hydrolase 36 (Usp36) of Drosophila virilis (Fruit fly).